The following is a 199-amino-acid chain: Phosphatidylethanolamine N-methyltransferase (199 aa).

The Lumenal segment spans residues 2–12; that stretch reads SWLLGYVDPTE. The helical intramembrane region spans 13–33; that stretch reads PSFVAAVLTIVFNPLFWNVVA. The Lumenal segment spans residues 34–45; that stretch reads RWEQRTRKLSRA. Residues 46–66 form a helical membrane-spanning segment; sequence FGSPYLACYSLGSIILLLNIL. At 67 to 93 the chain is on the cytoplasmic side; the sequence is RSHCFTQAMMSQPKMEGLDSHTIYFLG. The chain crosses the membrane as a helical span at residues 94-114; sequence LALLGWGLVFVLSSFYALGFT. Position 98–100 (98–100) interacts with S-adenosyl-L-methionine; it reads GWG. At 115–157 the chain is on the lumenal side; that stretch reads GTFLGDYFGILKESRVTTFPFSVLDNPMYWGSTANYLGWALMH. The helical transmembrane segment at 158-178 threads the bilayer; it reads ASPTGLLLTVLVALVYVVALL. Residues 179–199 lie on the Cytoplasmic side of the membrane; the sequence is FEEPFTAEIYRRKATRLHKRS. 180–181 is an S-adenosyl-L-methionine binding site; sequence EE.

The protein belongs to the class VI-like SAM-binding methyltransferase superfamily. PEMT/PEM2 methyltransferase family. As to expression, expressed in liver (at protein level).

The protein localises to the endoplasmic reticulum membrane. Its subcellular location is the mitochondrion membrane. It carries out the reaction a 1,2-diacyl-sn-glycero-3-phosphoethanolamine + S-adenosyl-L-methionine = a 1,2-diacyl-sn-glycero-3-phospho-N-methylethanolamine + S-adenosyl-L-homocysteine + H(+). The enzyme catalyses a 1,2-diacyl-sn-glycero-3-phospho-N-methylethanolamine + S-adenosyl-L-methionine = a 1,2-diacyl-sn-glycero-3-phospho-N,N-dimethylethanolamine + S-adenosyl-L-homocysteine + H(+). It catalyses the reaction a 1,2-diacyl-sn-glycero-3-phospho-N,N-dimethylethanolamine + S-adenosyl-L-methionine = a 1,2-diacyl-sn-glycero-3-phosphocholine + S-adenosyl-L-homocysteine + H(+). The catalysed reaction is 1,2-di-(9Z-octadecenoyl)-sn-glycero-3-phosphoethanolamine + S-adenosyl-L-methionine = 1,2-di-(9Z-octadecenoyl)-sn-glycero-3-phospho-N-methylethanolamine + S-adenosyl-L-homocysteine + H(+). It carries out the reaction 1,2-di-(9Z-octadecenoyl)-sn-glycero-3-phospho-N-methylethanolamine + S-adenosyl-L-methionine = 1,2-di-(9Z-octadecenoyl)-sn-glycero-3-phospho-N,N-dimethylethanolamine + S-adenosyl-L-homocysteine + H(+). The enzyme catalyses 1,2-di-(9Z-octadecenoyl)-sn-glycero-3-phospho-N,N-dimethylethanolamine + S-adenosyl-L-methionine = 1,2-di-(9Z-octadecenoyl)-sn-glycero-3-phosphocholine + S-adenosyl-L-homocysteine + H(+). It catalyses the reaction 1,2-di-(9Z,12Z-octadecadienoyl)-sn-glycero-3-phosphoethanolamine + S-adenosyl-L-methionine = 1,2-di-(9Z,12Z-octadecadienoyl)-sn-glycero-3-phospho-N-methylethanolamine + S-adenosyl-L-homocysteine + H(+). The catalysed reaction is 1,2-di-(9Z,12Z-octadecadienoyl)-sn-glycero-3-phospho-N-methylethanolamine + S-adenosyl-L-methionine = 1,2-di-(9Z,12Z-octadecadienoyl)-sn-glycero-3-phospho-N,N-dimethylethanolamine + S-adenosyl-L-homocysteine + H(+). It carries out the reaction 1,2-di-(9Z,12Z-octadecadienoyl)-sn-glycero-3-phospho-N,N-dimethylethanolamine + S-adenosyl-L-methionine = 1,2-di-(9Z,12Z-octadecadienoyl)-sn-glycero-3-phosphocholine + S-adenosyl-L-homocysteine + H(+). The enzyme catalyses 1,2-di-(9Z,12Z,15Z-octadecatrienoyl)-sn-glycero-3-phosphoethanolamine + S-adenosyl-L-methionine = 1,2-di-(9Z,12Z,15Z-octadecatrienoyl)-sn-glycero-3-phospho-N-methylethanolamine + S-adenosyl-L-homocysteine + H(+). It catalyses the reaction 1,2-di-(9Z,12Z,15Z-octadecatrienoyl)-sn-glycero-3-phospho-N-methylethanolamine + S-adenosyl-L-methionine = 1,2-di-(9Z,12Z,15Z-octadecatrienoyl)-sn-glycero-3-phospho-N,N-dimethylethanolamine + S-adenosyl-L-homocysteine + H(+). The catalysed reaction is 1,2-di-(9Z,12Z,15Z-octadecatrienoyl)-sn-glycero-3-phospho-N,N-dimethylethanolamine + S-adenosyl-L-methionine = 1,2-di-(9Z,12Z,15Z-octadecatrienoyl)-sn-glycero-3-phosphocholine + S-adenosyl-L-homocysteine + H(+). It carries out the reaction 1-hexadecanoyl-2-(4Z,7Z,10Z,13Z,16Z,19Z-docosahexaenoyl)-sn-glycero-3-phosphoethanolamine + S-adenosyl-L-methionine = 1-hexadecanoyl-2-(4Z,7Z,10Z,13Z,16Z,19Z-docosahexaenoyl)-sn-glycero-3-phospho-N-methylethanolamine + S-adenosyl-L-homocysteine + H(+). The enzyme catalyses 1-hexadecanoyl-2-(4Z,7Z,10Z,13Z,16Z,19Z-docosahexaenoyl)-sn-glycero-3-phospho-N-methylethanolamine + S-adenosyl-L-methionine = 1-hexadecanoyl-2-(4Z,7Z,10Z,13Z,16Z,19Z-docosahexaenoyl)-sn-glycero-3-phospho-N,N-dimethylethanolamine + S-adenosyl-L-homocysteine + H(+). It catalyses the reaction 1-hexadecanoyl-2-(4Z,7Z,10Z,13Z,16Z,19Z-docosahexaenoyl)-sn-glycero-3-phospho-N,N-dimethylethanolamine + S-adenosyl-L-methionine = 1-hexadecanoyl-2-(4Z,7Z,10Z,13Z,16Z,19Z-docosahexaenoyl)-sn-glycero-3-phosphocholine + S-adenosyl-L-homocysteine + H(+). It functions in the pathway phospholipid metabolism; phosphatidylcholine biosynthesis. Functionally, catalyzes the three sequential steps of the methylation pathway for the biosynthesis of phosphatidylcholine, a critical and essential component for membrane structure. Uses S-adenosylmethionine (S-adenosyl-L-methionine, SAM or AdoMet) as the methyl group donor for the methylation of phosphatidylethanolamine (1,2-diacyl-sn-glycero-3-phosphoethanolamine, PE) to phosphatidylmonomethylethanolamine (1,2-diacyl-sn-glycero-3-phospho-N-methylethanolamine, PMME), PMME to phosphatidyldimethylethanolamine (1,2-diacyl-sn-glycero-3-phospho-N,N-dimethylethanolamine, PDME), and PDME to phosphatidylcholine (1,2-diacyl-sn-glycero-3-phosphocholine, PC), producing S-adenosyl-L-homocysteine in each step. This is Phosphatidylethanolamine N-methyltransferase from Rattus norvegicus (Rat).